A 625-amino-acid polypeptide reads, in one-letter code: Keratin, type II cytoskeletal 1 (625 aa).

Low complexity predominate over residues 1 to 12 (MSFQCSSRSLCR). Positions 1–27 (MSFQCSSRSLCRSGGGGGGRNFSSGSA) are disordered. The tract at residues 1–178 (MSFQCSSRSL…DPQIQKVKSQ (178 aa)) is head. An Omega-N-methylarginine modification is found at Arg-12. A phosphoserine mark is found at Ser-23 and Ser-26. Position 51 is an omega-N-methylarginine (Arg-51). At Ser-69 the chain carries Phosphoserine. The stretch at 171–319 (QIQKVKSQER…DIDFFSTLYQ (149 aa)) forms a coiled coil. The coil 1A stretch occupies residues 179–214 (EREQIKSLNDKFASFIDKVRFLEQQNQVLQTKWELL). In terms of domain architecture, IF rod spans 179 to 492 (EREQIKSLND…KLLEGEEIRM (314 aa)). Residues 215 to 233 (QQVDTSTRTQNLDPFFESY) form a linker 1 region. The segment at 234 to 325 (ISNLRRQVDS…TLYQMELSQM (92 aa)) is coil 1B. The residue at position 275 (Lys-275) is an N6,N6-dimethyllysine. Residues 326-349 (QTQISETNVVLSMDNNRTLDLDGI) form a linker 12 region. Residues 350 to 488 (IAEVKAQYDS…ATYRKLLEGE (139 aa)) form a coil 2 region. A coiled-coil region spans residues 388–475 (DSVKNTKMEI…ELMNTKLALD (88 aa)). The tract at residues 489–625 (EIRMSGECTP…VSTTYSRGTN (137 aa)) is tail. 2 disordered regions span residues 496 to 525 (CTPN…YGSG) and 560 to 625 (SGGG…RGTN). Over residues 500–515 (VSVSVSTSHTSMSGTS) the composition is skewed to low complexity. 2 stretches are compositionally biased toward gly residues: residues 516-525 (SRGGGRYGSG) and 560-606 (SGGG…GGVK). Residues Arg-517, Arg-574, and Arg-596 each carry the omega-N-methylarginine modification. Residues 613-625 (VKFVSTTYSRGTN) are compositionally biased toward polar residues.

This sequence belongs to the intermediate filament family. As to quaternary structure, heterotetramer of two type I and two type II keratins. Heterodimer with KRT10. Two heterodimers of KRT1 and KRT10 form a heterotetramer. Forms a heterodimer with KRT14; the interaction is more abundant in the absence of KRT5. Interacts with ITGB1 in the presence of RACK1 and SRC, and with RACK1. Interacts with C1QBP; the association represents a cell surface kininogen receptor. Interacts with EPPK1; interaction is dependent of higher-order structure of intermediate filament. In terms of processing, undergoes deimination of some arginine residues (citrullination).

The protein resides in the cell membrane. It localises to the cytoplasm. In terms of biological role, may regulate the activity of kinases such as PKC and SRC via binding to integrin beta-1 (ITB1) and the receptor of activated protein C kinase 1 (RACK1). In complex with C1QBP is a high affinity receptor for kininogen-1/HMWK. The protein is Keratin, type II cytoskeletal 1 of Rattus norvegicus (Rat).